Reading from the N-terminus, the 206-residue chain is Thiamine-phosphate synthase (206 aa).

Residues 36–40 (QLRMK) and N68 contribute to the 4-amino-2-methyl-5-(diphosphooxymethyl)pyrimidine site. 2 residues coordinate Mg(2+): D69 and D88. S106 provides a ligand contact to 4-amino-2-methyl-5-(diphosphooxymethyl)pyrimidine. Residue 132-134 (TNT) coordinates 2-[(2R,5Z)-2-carboxy-4-methylthiazol-5(2H)-ylidene]ethyl phosphate. K135 contributes to the 4-amino-2-methyl-5-(diphosphooxymethyl)pyrimidine binding site. Residues G162 and 182-183 (VS) each bind 2-[(2R,5Z)-2-carboxy-4-methylthiazol-5(2H)-ylidene]ethyl phosphate.

The protein belongs to the thiamine-phosphate synthase family. Mg(2+) serves as cofactor.

It catalyses the reaction 2-[(2R,5Z)-2-carboxy-4-methylthiazol-5(2H)-ylidene]ethyl phosphate + 4-amino-2-methyl-5-(diphosphooxymethyl)pyrimidine + 2 H(+) = thiamine phosphate + CO2 + diphosphate. The enzyme catalyses 2-(2-carboxy-4-methylthiazol-5-yl)ethyl phosphate + 4-amino-2-methyl-5-(diphosphooxymethyl)pyrimidine + 2 H(+) = thiamine phosphate + CO2 + diphosphate. It carries out the reaction 4-methyl-5-(2-phosphooxyethyl)-thiazole + 4-amino-2-methyl-5-(diphosphooxymethyl)pyrimidine + H(+) = thiamine phosphate + diphosphate. It participates in cofactor biosynthesis; thiamine diphosphate biosynthesis; thiamine phosphate from 4-amino-2-methyl-5-diphosphomethylpyrimidine and 4-methyl-5-(2-phosphoethyl)-thiazole: step 1/1. Its function is as follows. Condenses 4-methyl-5-(beta-hydroxyethyl)thiazole monophosphate (THZ-P) and 2-methyl-4-amino-5-hydroxymethyl pyrimidine pyrophosphate (HMP-PP) to form thiamine monophosphate (TMP). This Methanococcus vannielii (strain ATCC 35089 / DSM 1224 / JCM 13029 / OCM 148 / SB) protein is Thiamine-phosphate synthase.